The chain runs to 413 residues: Eukaryotic initiation factor 4A-11 (413 aa).

The short motif at 40 to 68 (ESFDAMGLQENLLRGIYAYGFEKPSAIQQ) is the Q motif element. The Helicase ATP-binding domain maps to 71–241 (IVPFCKGLDV…RKFMNKPVRI (171 aa)). Residue 84-91 (AQSGTGKT) participates in ATP binding. Positions 189–192 (DEAD) match the DEAD box motif. The region spanning 252 to 413 (GIKQFYVNVD…ELPANVADLL (162 aa)) is the Helicase C-terminal domain.

Belongs to the DEAD box helicase family. eIF4A subfamily. EIF4F is a multi-subunit complex, the composition of which varies with external and internal environmental conditions. It is composed of at least EIF4A, EIF4E and EIF4G.

It catalyses the reaction ATP + H2O = ADP + phosphate + H(+). Functionally, ATP-dependent RNA helicase which is a subunit of the eIF4F complex involved in cap recognition and is required for mRNA binding to ribosome. In the current model of translation initiation, eIF4A unwinds RNA secondary structures in the 5'-UTR of mRNAs which is necessary to allow efficient binding of the small ribosomal subunit, and subsequent scanning for the initiator codon. This chain is Eukaryotic initiation factor 4A-11, found in Nicotiana tabacum (Common tobacco).